We begin with the raw amino-acid sequence, 152 residues long: Ribosome maturation factor RimP (152 aa).

This sequence belongs to the RimP family.

It is found in the cytoplasm. Its function is as follows. Required for maturation of 30S ribosomal subunits. This is Ribosome maturation factor RimP from Sodalis glossinidius (strain morsitans).